Here is a 65-residue protein sequence, read N- to C-terminus: Hainantoxin-X.2 (65 aa).

An N-terminal signal peptide occupies residues 1-20; sequence MNVKILVLVAVLCLVVSTHA. A propeptide spanning residues 21 to 37 is cleaved from the precursor; it reads ERHSKTDMEDSPMIQER. 3 disulfide bridges follow: cysteine 39–cysteine 56, cysteine 46–cysteine 59, and cysteine 55–cysteine 64.

This sequence belongs to the neurotoxin 36 family. 02 subfamily. Expressed by the venom gland.

Its subcellular location is the secreted. Its function is as follows. Reversibly blocks N-type calcium channels (Cav2.2/CACNA1B) in rat dorsal root ganglion cells. Elicits no toxic symptoms in either vertebrates or invertebrates during a period of 48 hours post-injection, when it was assayed in vivo by direct injection into mice and cockroaches. The protein is Hainantoxin-X.2 of Cyriopagopus hainanus (Chinese bird spider).